The sequence spans 295 residues: Nuclear transcription factor Y subunit A-2 (295 aa).

A Subunit association domain (SAD) motif is present at residues 139-165 (YVNSKQYHGIIRRRQSRAKAAAVLDQK). A DNA-binding region (NFYA/HAP2-type) is located at residues 173–198 (KPYMHHSRHLHALRRPRGSGGRFLNT). The segment covering 178–189 (HSRHLHALRRPR) has biased composition (basic residues). The disordered stretch occupies residues 178–244 (HSRHLHALRR…VVHPENGTMN (67 aa)). The segment covering 197 to 209 (NTKSQNLENSGTN) has biased composition (polar residues). Positions 216–233 (SMQIQSQPKPQQSNSQNS) are enriched in low complexity.

The protein belongs to the NFYA/HAP2 subunit family. In terms of assembly, heterotrimeric transcription factor composed of three components, NF-YA, NF-YB and NF-YC. NF-YB and NF-YC must interact and dimerize for NF-YA association and DNA binding. Component of a heat stress-inducible transcriptional complex with NF-YA and NF-YB subunits made, at least, of NFYA2, NFYB3 and DPB3-1 in cooperation with DREB2A. Ubiquitous. Expressed in seedlings, roots, petioles, hypocotyls, reproductive organ tissues and leaves.

The protein resides in the nucleus. Functionally, stimulates the transcription of various genes by recognizing and binding to a CCAAT motif in promoters. Promotes the expression of heat stress-inducible genes by contributing to the formation of a heat stress-specific transcriptional complex with NF-Y subunits (e.g. DPB3-1, NF-YA2 and NF-YB3) and DREB2A at the promoter of target genes, thus promoting heat tolerance. This chain is Nuclear transcription factor Y subunit A-2, found in Arabidopsis thaliana (Mouse-ear cress).